The primary structure comprises 792 residues: Vicilin Car i 2.0101 (792 aa).

Positions 1–26 (MVTKAKIPLFLFLSALFLALVCSSLA) are cleaved as a signal peptide. Disordered stretches follow at residues 132–153 (ERRERRRGRDDDDKENPRDPRE), 182–217 (RFEEEQRRQEERERRRGRDNDDEENPRDPREQYRQC), 240–272 (ERLEEEQRKQEERERRRGRDEDDQNPRDPEQRY), 302–325 (EERERQRGRDRQDPQQQYHRCQRR), and 350–394 (QQGR…ESGE). Basic and acidic residues-rich tracts occupy residues 182–200 (RFEEEQRRQEERERRRGRD) and 207–217 (PRDPREQYRQC). Positions 302–314 (EERERQRGRDRQD) are enriched in basic and acidic residues. The span at 315 to 325 (PQQQYHRCQRR) shows a compositional bias: low complexity. The segment covering 350 to 375 (QQGREWGPDQASPRRESRGREEEQQR) has biased composition (basic and acidic residues). Y379 serves as a coordination point for Cu cation. 2 consecutive Cupin type-1 domains span residues 384-537 (QGLR…DRLE) and 582-754 (ISLK…EEIE). Cu cation contacts are provided by C652, H654, and H698. Residues 727–754 (LAGQNNIINQLEREAKELSFNMPREEIE) adopt a coiled-coil conformation.

It belongs to the 7S seed storage protein family. As to quaternary structure, homotrimer. In terms of tissue distribution, expressed in seed (at protein level). Expressed in seed.

Functionally, seed storage protein. This Carya illinoinensis (Pecan) protein is Vicilin Car i 2.0101.